The following is a 303-amino-acid chain: Quinolinate synthase (303 aa).

Residues His-23 and Ser-40 each coordinate iminosuccinate. Residue Cys-85 coordinates [4Fe-4S] cluster. Residues 111-113 (YVN) and Ser-128 contribute to the iminosuccinate site. Cys-171 contributes to the [4Fe-4S] cluster binding site. Residues 197–199 (HPE) and Thr-214 contribute to the iminosuccinate site. Cys-259 contributes to the [4Fe-4S] cluster binding site.

Belongs to the quinolinate synthase family. Type 2 subfamily. Requires [4Fe-4S] cluster as cofactor.

The protein localises to the cytoplasm. It catalyses the reaction iminosuccinate + dihydroxyacetone phosphate = quinolinate + phosphate + 2 H2O + H(+). It participates in cofactor biosynthesis; NAD(+) biosynthesis; quinolinate from iminoaspartate: step 1/1. Its function is as follows. Catalyzes the condensation of iminoaspartate with dihydroxyacetone phosphate to form quinolinate. In Thermodesulfovibrio yellowstonii (strain ATCC 51303 / DSM 11347 / YP87), this protein is Quinolinate synthase.